Consider the following 30-residue polypeptide: Photosystem I reaction center subunit XII (30 aa).

A helical transmembrane segment spans residues 6–26 (VFTILAIALVPAVMAALLGSA).

The protein belongs to the PsaM family.

Its subcellular location is the cellular thylakoid membrane. The protein is Photosystem I reaction center subunit XII of Synechococcus sp. (strain JA-3-3Ab) (Cyanobacteria bacterium Yellowstone A-Prime).